Reading from the N-terminus, the 85-residue chain is RNA-binding protein Hfq (85 aa).

One can recognise a Sm domain in the interval 9–68 (DPFLNALRRERIPVSIYLVNGIKLQGQIESFDQFVVLLKNTVSQMVYKHAISTVVPARIP).

This sequence belongs to the Hfq family. In terms of assembly, homohexamer.

Functionally, RNA chaperone that binds small regulatory RNA (sRNAs) and mRNAs to facilitate mRNA translational regulation in response to envelope stress, environmental stress and changes in metabolite concentrations. Also binds with high specificity to tRNAs. This is RNA-binding protein Hfq from Idiomarina loihiensis (strain ATCC BAA-735 / DSM 15497 / L2-TR).